A 128-amino-acid polypeptide reads, in one-letter code: Flagellar basal body rod protein FlgB (128 aa).

Belongs to the flagella basal body rod proteins family. The basal body constitutes a major portion of the flagellar organelle and consists of a number of rings mounted on a central rod. In Gram-negative bacteria, at least four rings, L, P, S and M are present, whereas Gram-positive bacteria lack the L and P rings. The rod consists of about 26 subunits of FlgG in the distal portion, and FlgB, FlgC and FlgF build up the proximal portion of the rod with about 6 subunits each. Rod assembly occurs by export via the flagellum-specific pathway of its constituent proteins and by their incorporation into the rod structure in the probable order of FlgB, FlgC, FlgF and FlgG. Another protein, FliE, also assembles onto the stable rod structure.

The protein resides in the bacterial flagellum basal body. Its function is as follows. Structural component of flagellum, the bacterial motility apparatus. Part of the rod structure of flagellar basal body. In Cereibacter sphaeroides (Rhodobacter sphaeroides), this protein is Flagellar basal body rod protein FlgB.